A 469-amino-acid chain; its full sequence is Trigger factor (469 aa).

The region spanning 165–250 (GDRVTIDYIG…VKAVCKSDEL (86 aa)) is the PPIase FKBP-type domain. The span at 444–460 (DLTEKKPLKKKTAEKVS) shows a compositional bias: basic and acidic residues. The tract at residues 444-469 (DLTEKKPLKKKTAEKVSTKKKAPKKS) is disordered.

The protein belongs to the FKBP-type PPIase family. Tig subfamily.

It localises to the cytoplasm. The catalysed reaction is [protein]-peptidylproline (omega=180) = [protein]-peptidylproline (omega=0). In terms of biological role, involved in protein export. Acts as a chaperone by maintaining the newly synthesized protein in an open conformation. Functions as a peptidyl-prolyl cis-trans isomerase. This chain is Trigger factor, found in Bartonella henselae (strain ATCC 49882 / DSM 28221 / CCUG 30454 / Houston 1) (Rochalimaea henselae).